Reading from the N-terminus, the 122-residue chain is Small ribosomal subunit protein uS13 (122 aa).

The disordered stretch occupies residues 98 to 122; that stretch reads VRGQRTHTNARTRKGPAKAIAGKKK.

Belongs to the universal ribosomal protein uS13 family. In terms of assembly, part of the 30S ribosomal subunit. Forms a loose heterodimer with protein S19. Forms two bridges to the 50S subunit in the 70S ribosome.

Its function is as follows. Located at the top of the head of the 30S subunit, it contacts several helices of the 16S rRNA. In the 70S ribosome it contacts the 23S rRNA (bridge B1a) and protein L5 of the 50S subunit (bridge B1b), connecting the 2 subunits; these bridges are implicated in subunit movement. Contacts the tRNAs in the A and P-sites. The protein is Small ribosomal subunit protein uS13 of Ruegeria sp. (strain TM1040) (Silicibacter sp.).